The following is a 62-amino-acid chain: Photosystem II reaction center protein Z (62 aa).

A run of 2 helical transmembrane segments spans residues 8–28 (AVFA…VVFA) and 41–61 (FSGT…NSLI).

It belongs to the PsbZ family. PSII is composed of 1 copy each of membrane proteins PsbA, PsbB, PsbC, PsbD, PsbE, PsbF, PsbH, PsbI, PsbJ, PsbK, PsbL, PsbM, PsbT, PsbY, PsbZ, Psb30/Ycf12, at least 3 peripheral proteins of the oxygen-evolving complex and a large number of cofactors. It forms dimeric complexes.

The protein localises to the plastid. The protein resides in the chloroplast thylakoid membrane. Functionally, may control the interaction of photosystem II (PSII) cores with the light-harvesting antenna, regulates electron flow through the 2 photosystem reaction centers. PSII is a light-driven water plastoquinone oxidoreductase, using light energy to abstract electrons from H(2)O, generating a proton gradient subsequently used for ATP formation. The chain is Photosystem II reaction center protein Z from Gossypium barbadense (Sea Island cotton).